Reading from the N-terminus, the 120-residue chain is Large ribosomal subunit protein uL18 (120 aa).

This sequence belongs to the universal ribosomal protein uL18 family. In terms of assembly, part of the 50S ribosomal subunit; part of the 5S rRNA/L5/L18/L25 subcomplex. Contacts the 5S and 23S rRNAs.

Its function is as follows. This is one of the proteins that bind and probably mediate the attachment of the 5S RNA into the large ribosomal subunit, where it forms part of the central protuberance. In Rhizobium etli (strain ATCC 51251 / DSM 11541 / JCM 21823 / NBRC 15573 / CFN 42), this protein is Large ribosomal subunit protein uL18.